The chain runs to 363 residues: Phosphoserine aminotransferase (363 aa).

Position 42 (arginine 42) interacts with L-glutamate. Positions 105, 155, 175, and 198 each coordinate pyridoxal 5'-phosphate. Lysine 199 carries the post-translational modification N6-(pyridoxal phosphate)lysine. 240–241 is a pyridoxal 5'-phosphate binding site; that stretch reads NT.

This sequence belongs to the class-V pyridoxal-phosphate-dependent aminotransferase family. SerC subfamily. As to quaternary structure, homodimer. Requires pyridoxal 5'-phosphate as cofactor.

Its subcellular location is the cytoplasm. It carries out the reaction O-phospho-L-serine + 2-oxoglutarate = 3-phosphooxypyruvate + L-glutamate. It catalyses the reaction 4-(phosphooxy)-L-threonine + 2-oxoglutarate = (R)-3-hydroxy-2-oxo-4-phosphooxybutanoate + L-glutamate. It participates in amino-acid biosynthesis; L-serine biosynthesis; L-serine from 3-phospho-D-glycerate: step 2/3. The protein operates within cofactor biosynthesis; pyridoxine 5'-phosphate biosynthesis; pyridoxine 5'-phosphate from D-erythrose 4-phosphate: step 3/5. Functionally, catalyzes the reversible conversion of 3-phosphohydroxypyruvate to phosphoserine and of 3-hydroxy-2-oxo-4-phosphonooxybutanoate to phosphohydroxythreonine. This chain is Phosphoserine aminotransferase, found in Janthinobacterium sp. (strain Marseille) (Minibacterium massiliensis).